The primary structure comprises 110 residues: Putative UPF0377 protein YIR040C (110 aa).

It belongs to the UPF0377 family.

The chain is Putative UPF0377 protein YIR040C from Saccharomyces cerevisiae (strain ATCC 204508 / S288c) (Baker's yeast).